We begin with the raw amino-acid sequence, 515 residues long: Protein translocase subunit SecD (515 aa).

The chain crosses the membrane as a helical span at residues 6–26 (LYSLIFIIILTAFAVWVDLPG). The interval 141–186 (AITNGNQNQNSTKNGTPTPGTTPTPESTPQANQTPVAANVTPTPED) is disordered. A compositionally biased stretch (low complexity) spans 150-169 (NSTKNGTPTPGTTPTPESTP). Positions 170–186 (QANQTPVAANVTPTPED) are enriched in polar residues. 5 helical membrane passes run 322–342 (RSIR…ILYY), 344–364 (LPGF…FALF), 367–387 (IPVT…GMAV), 427–447 (ISTL…GASV), and 450–470 (GFAI…IFVT).

The protein belongs to the SecD/SecF family. SecD subfamily. Forms a complex with SecF. Part of the essential Sec protein translocation apparatus which comprises SecA, SecYEG and auxiliary proteins SecDF. Other proteins may also be involved.

The protein localises to the cell membrane. Part of the Sec protein translocase complex. Interacts with the SecYEG preprotein conducting channel. SecDF uses the proton motive force (PMF) to complete protein translocation after the ATP-dependent function of SecA. This Thermobaculum terrenum (strain ATCC BAA-798 / CCMEE 7001 / YNP1) protein is Protein translocase subunit SecD.